The sequence spans 225 residues: MHIHDWPTHERPREKLLARGATALSDAELLAILVGSGLRGQDAVQTARDLLHRHGPLRLLLDRPAKALTRLPGLGPASACKFAAAMELAQRHLMSALERGEALSDPPSVGRYFSQRLRARAYEVFAVLFLDNRHRAIAFEELFTGTIDGADIHPREVVRRALLHNAAAVIVGHNHPSGNPEPSEADRAVTKRLLDSLELVDIRLLDHFVIGDGRPVSFAERGWLE.

The MPN domain occupies 102–224 (ALSDPPSVGR…PVSFAERGWL (123 aa)). 3 residues coordinate Zn(2+): histidine 173, histidine 175, and aspartate 186. Residues 173–186 (HNHPSGNPEPSEAD) carry the JAMM motif motif.

This sequence belongs to the UPF0758 family.

This chain is UPF0758 protein XAC3915, found in Xanthomonas axonopodis pv. citri (strain 306).